Consider the following 166-residue polypeptide: Ribosome maturation factor RimM (166 aa).

The region spanning 90-165 (NDNDAFSIFY…IITLKNIEGL (76 aa)) is the PRC barrel domain.

Belongs to the RimM family. As to quaternary structure, binds ribosomal protein uS19.

The protein localises to the cytoplasm. In terms of biological role, an accessory protein needed during the final step in the assembly of 30S ribosomal subunit, possibly for assembly of the head region. Essential for efficient processing of 16S rRNA. May be needed both before and after RbfA during the maturation of 16S rRNA. It has affinity for free ribosomal 30S subunits but not for 70S ribosomes. The polypeptide is Ribosome maturation factor RimM (Mesoplasma florum (strain ATCC 33453 / NBRC 100688 / NCTC 11704 / L1) (Acholeplasma florum)).